We begin with the raw amino-acid sequence, 238 residues long: Orotidine 5'-phosphate decarboxylase (238 aa).

Residues aspartate 13, lysine 35, 62-71 (DLKFHDIPNT), threonine 121, arginine 182, glutamine 191, glycine 211, and arginine 212 contribute to the substrate site. Lysine 64 serves as the catalytic Proton donor.

Belongs to the OMP decarboxylase family. Type 1 subfamily. Homodimer.

It carries out the reaction orotidine 5'-phosphate + H(+) = UMP + CO2. It functions in the pathway pyrimidine metabolism; UMP biosynthesis via de novo pathway; UMP from orotate: step 2/2. Its function is as follows. Catalyzes the decarboxylation of orotidine 5'-monophosphate (OMP) to uridine 5'-monophosphate (UMP). The polypeptide is Orotidine 5'-phosphate decarboxylase (Saccharophagus degradans (strain 2-40 / ATCC 43961 / DSM 17024)).